A 419-amino-acid polypeptide reads, in one-letter code: 5-methylthioadenosine/S-adenosylhomocysteine deaminase (419 aa).

Residues H58 and H60 each contribute to the Zn(2+) site. Substrate contacts are provided by E87 and H179. H206 is a Zn(2+) binding site. Substrate contacts are provided by E209 and D294. D294 provides a ligand contact to Zn(2+).

This sequence belongs to the metallo-dependent hydrolases superfamily. MTA/SAH deaminase family. Zn(2+) serves as cofactor.

The catalysed reaction is S-adenosyl-L-homocysteine + H2O + H(+) = S-inosyl-L-homocysteine + NH4(+). It catalyses the reaction S-methyl-5'-thioadenosine + H2O + H(+) = S-methyl-5'-thioinosine + NH4(+). In terms of biological role, catalyzes the deamination of 5-methylthioadenosine and S-adenosyl-L-homocysteine into 5-methylthioinosine and S-inosyl-L-homocysteine, respectively. Is also able to deaminate adenosine. In Pyrococcus furiosus (strain ATCC 43587 / DSM 3638 / JCM 8422 / Vc1), this protein is 5-methylthioadenosine/S-adenosylhomocysteine deaminase.